A 100-amino-acid polypeptide reads, in one-letter code: uncharacterized protein (100 aa).

As to quaternary structure, may interact with ribosomes.

This is an uncharacterized protein from Saccharomyces cerevisiae (strain ATCC 204508 / S288c) (Baker's yeast).